The sequence spans 544 residues: Phosphoenolpyruvate carboxykinase (ATP) (544 aa).

Residue 246-253 (GLSGTGKT) participates in ATP binding.

This sequence belongs to the phosphoenolpyruvate carboxykinase (ATP) family.

The catalysed reaction is oxaloacetate + ATP = phosphoenolpyruvate + ADP + CO2. It participates in carbohydrate biosynthesis; gluconeogenesis. In Candida glabrata (strain ATCC 2001 / BCRC 20586 / JCM 3761 / NBRC 0622 / NRRL Y-65 / CBS 138) (Yeast), this protein is Phosphoenolpyruvate carboxykinase (ATP) (PCK1).